We begin with the raw amino-acid sequence, 64 residues long: Large ribosomal subunit protein bL35 (64 aa).

The span at 1–22 (MPKMKSHTGMGKRVRVTGKGKI) shows a compositional bias: basic residues. Residues 1-39 (MPKMKSHTGMGKRVRVTGKGKIVKQQAGLRHNLEKKPST) form a disordered region.

The protein belongs to the bacterial ribosomal protein bL35 family.

This is Large ribosomal subunit protein bL35 from Salinispora arenicola (strain CNS-205).